A 274-amino-acid chain; its full sequence is Kit ligand (274 aa).

The signal sequence occupies residues 1-25 (MKKTQTWIITCIYLQLLLFNPLVHS). The residue at position 26 (Q26) is a Pyrrolidone carboxylic acid. Residues 26 to 215 (QGICRNRVTD…SNSIEDSSLQ (190 aa)) lie on the Extracellular side of the membrane. Cystine bridges form between C29/C114 and C68/C164. 4 N-linked (GlcNAc...) asparagine glycosylation sites follow: N90, N97, N145, and N196. A helical membrane pass occupies residues 216–238 (WAAVALPAFFSLVIGFAFGALYW). At 239–274 (KKKQPNLTRTVENRQINEEDNEISMLQEKEREFQEV) the chain is on the cytoplasmic side.

The protein belongs to the SCF family. As to quaternary structure, homodimer, non-covalently linked. A soluble form is produced by proteolytic processing of the extracellular domain.

It is found in the cytoplasm. The protein localises to the cytoskeleton. It localises to the cell membrane. Its subcellular location is the cell projection. The protein resides in the lamellipodium. It is found in the filopodium. The protein localises to the secreted. Functionally, stimulates the proliferation of mast cells. Able to augment the proliferation of both myeloid and lymphoid hematopoietic progenitors in bone marrow culture. Also mediates cell-cell adhesion. Acts synergistically with other cytokines, probably interleukins. The sequence is that of Kit ligand (KITLG) from Capra hircus (Goat).